A 218-amino-acid polypeptide reads, in one-letter code: Mitochondrial fission factor (218 aa).

Residues 1–198 (MAEISRIQYE…ENKERAKREM (198 aa)) are Cytoplasmic-facing. The residue at position 89 (T89) is a Phosphothreonine. Phosphoserine is present on residues S129, S131, S146, and S171. A coiled-coil region spans residues 167 to 198 (VDAASLRRQIIKLNRRLQLLEEENKERAKREM). The chain crosses the membrane as a helical; Anchor for type IV membrane protein span at residues 199–216 (VMYSITVAFWLLNSWLWF). Residues 217–218 (RR) lie on the Mitochondrial intermembrane side of the membrane.

This sequence belongs to the Tango11 family. As to quaternary structure, homodimer. Interacts with DNM1L. Interacts with C11orf65/MFI; the interaction inhibits MFF interaction with DNM1L.

Its subcellular location is the mitochondrion outer membrane. The protein resides in the peroxisome. It localises to the cytoplasmic vesicle. It is found in the secretory vesicle. The protein localises to the synaptic vesicle. Functionally, plays a role in mitochondrial and peroxisomal fission. Promotes the recruitment and association of the fission mediator dynamin-related protein 1 (DNM1L) to the mitochondrial surface. May be involved in regulation of synaptic vesicle membrane dynamics by recruitment of DNM1L to clathrin-containing vesicles. This chain is Mitochondrial fission factor (MFF), found in Bos taurus (Bovine).